A 199-amino-acid chain; its full sequence is Stress response protein SCP2 (199 aa).

This sequence belongs to the CAPAB/TerDEXZ family.

It localises to the cytoplasm. In Bacillus subtilis (strain 168), this protein is Stress response protein SCP2 (yceC).